Here is a 572-residue protein sequence, read N- to C-terminus: Urease subunit alpha (572 aa).

In terms of domain architecture, Urease spans 136–572 (GGIDTHIHWI…VPLAQRYFLF (437 aa)). 3 residues coordinate Ni(2+): His-141, His-143, and Lys-224. Lys-224 is modified (N6-carboxylysine). His-226 is a substrate binding site. Residues His-253 and His-279 each coordinate Ni(2+). The active-site Proton donor is the His-327. Asp-367 provides a ligand contact to Ni(2+).

This sequence belongs to the metallo-dependent hydrolases superfamily. Urease alpha subunit family. Heterotrimer of UreA (gamma), UreB (beta) and UreC (alpha) subunits. Three heterotrimers associate to form the active enzyme. It depends on Ni cation as a cofactor. Carboxylation allows a single lysine to coordinate two nickel ions.

Its subcellular location is the cytoplasm. It carries out the reaction urea + 2 H2O + H(+) = hydrogencarbonate + 2 NH4(+). Its pathway is nitrogen metabolism; urea degradation; CO(2) and NH(3) from urea (urease route): step 1/1. This is Urease subunit alpha from Actinobacillus pleuropneumoniae serotype 5b (strain L20).